Here is a 199-residue protein sequence, read N- to C-terminus: Recombination protein RecR (199 aa).

The C4-type zinc finger occupies 58–73 (CRICYNITDTEVCNIC). In terms of domain architecture, Toprim spans 81–176 (SLICVVSHPM…KVTRIAHGVP (96 aa)).

The protein belongs to the RecR family.

Functionally, may play a role in DNA repair. It seems to be involved in an RecBC-independent recombinational process of DNA repair. It may act with RecF and RecO. This Thermoanaerobacter pseudethanolicus (strain ATCC 33223 / 39E) (Clostridium thermohydrosulfuricum) protein is Recombination protein RecR.